Reading from the N-terminus, the 371-residue chain is Uroporphyrinogen decarboxylase (371 aa).

Polar residues predominate over residues 1-14; the sequence is MARWATMSTETTGT. The segment at 1-30 is disordered; the sequence is MARWATMSTETTGTGARDEGPRPGDPADSP. Substrate is bound by residues 49-53, D98, Y173, S228, and H342; that span reads RQAGR.

Belongs to the uroporphyrinogen decarboxylase family. Homodimer.

The protein localises to the cytoplasm. The enzyme catalyses uroporphyrinogen III + 4 H(+) = coproporphyrinogen III + 4 CO2. Its pathway is porphyrin-containing compound metabolism; protoporphyrin-IX biosynthesis; coproporphyrinogen-III from 5-aminolevulinate: step 4/4. In terms of biological role, catalyzes the decarboxylation of four acetate groups of uroporphyrinogen-III to yield coproporphyrinogen-III. This is Uroporphyrinogen decarboxylase from Salinispora tropica (strain ATCC BAA-916 / DSM 44818 / JCM 13857 / NBRC 105044 / CNB-440).